A 56-amino-acid chain; its full sequence is Large ribosomal subunit protein bL32 (56 aa).

Residues 1-16 are compositionally biased toward basic residues; sequence MAVQKSKKSRSRRDMR. The segment at 1 to 56 is disordered; that stretch reads MAVQKSKKSRSRRDMRRSHDAIDGPTLSVDSTTGETHRRHHVTADGYYKGRKVVNK.

This sequence belongs to the bacterial ribosomal protein bL32 family.

This chain is Large ribosomal subunit protein bL32, found in Idiomarina loihiensis (strain ATCC BAA-735 / DSM 15497 / L2-TR).